We begin with the raw amino-acid sequence, 84 residues long: UPF0473 protein CKL_1327 (84 aa).

It belongs to the UPF0473 family.

This chain is UPF0473 protein CKL_1327, found in Clostridium kluyveri (strain ATCC 8527 / DSM 555 / NBRC 12016 / NCIMB 10680 / K1).